The chain runs to 810 residues: Volume-regulated anion channel subunit LRRC8A (810 aa).

Met1 is subject to N-acetylmethionine. Topologically, residues 1 to 23 (MIPVTELRYFADTQPAYRILKPW) are cytoplasmic. A helical membrane pass occupies residues 24–47 (WDVFTDYISIVMLMIAVFGGTLQV). Topologically, residues 48–123 (TQDKMICLPC…YENRLHWFAK (76 aa)) are extracellular. 3 disulfide bridges follow: Cys54–Cys310, Cys57–Cys65, and Cys113–Cys295. N-linked (GlcNAc...) asparagine glycans are attached at residues Asn66 and Asn83. The helical transmembrane segment at 124–142 (YFPYLVLLHTLIFLACSNF) threads the bilayer. The Cytoplasmic segment spans residues 143-264 (WFKFPRTSSK…EEGDIVYRLY (122 aa)). Residue Thr200 is modified to Phosphothreonine. At Ser202 the chain carries Phosphoserine. Thr215 is subject to Phosphothreonine. Phosphoserine is present on Ser217. The helical transmembrane segment at 265-286 (MRQTIIKVIKFILIICYTVYYV) threads the bilayer. Over 287–316 (HNIKFDVDCTVDIESLTGYRTYRCAHPLAT) the chain is Extracellular. Residues 317 to 341 (LFKILASFYISLVIFYGLICMYTLW) form a helical membrane-spanning segment. Residues 342–810 (WMLRRSLKKY…RLWRADKEQA (469 aa)) are Cytoplasmic-facing. LRR repeat units follow at residues 399-422 (ENKL…RLTK), 423-445 (NAQD…VFDL), 447-468 (ELEV…IAQL), 469-492 (TGLK…AFLR), 493-515 (ENLR…IYSL), 518-542 (LEEL…GLRE), 543-565 (LKRL…VTDV), 567-589 (VHLQ…SLKK), 590-613 (MANL…IFSL), 615-637 (NLQE…SFQH), 639-661 (HRLT…IGNL), 662-684 (TNLE…LFYC), 686-707 (KLRY…IGLL), 708-730 (QNLQ…LFQC), 732-753 (KLRA…VGEL), 754-776 (TNLT…LGEC), and 778-801 (LLKR…VKER). The short motif at 706-707 (LL) is the Di-leucine motif element.

This sequence belongs to the LRRC8 family. As to quaternary structure, heterohexamer; oligomerizes with other LRRC8 proteins (LRRC8B, LRRC8C, LRRC8D and/or LRRC8E) to form a heterohexamer. Can form homohexamers in vitro, but these have lower conductance than heterohexamers. In vivo, the subunit composition may depend primarily on expression levels, and heterooligomeric channels containing various proportions of the different LRRC8 proteins may coexist. Interact with GRB2. Interacts with NOX4; this interaction prevents the ubiquitin-mediated degradation of LRRC8A. In terms of processing, N-glycosylated. As to expression, expressed in brain, kidney, ovary, lung, liver, heart, and fetal brain and liver. Found at high levels in bone marrow; lower levels are detected in peripheral blood cells. Expressed on T-cells as well as on B-lineage cells.

It localises to the cell membrane. The protein localises to the lysosome membrane. It catalyses the reaction chloride(in) = chloride(out). The enzyme catalyses iodide(out) = iodide(in). The catalysed reaction is taurine(out) = taurine(in). It carries out the reaction L-aspartate(out) = L-aspartate(in). It catalyses the reaction L-glutamate(out) = L-glutamate(in). The enzyme catalyses myo-inositol(out) = myo-inositol(in). The catalysed reaction is 2',3'-cGAMP(out) = 2',3'-cGAMP(in). Its activity is regulated as follows. Inhibited by (4-[(2-butyl-6,7-dichloro-2-cyclopentyl-2,3-dihydro-1-oxo-1H-inden-5-yl)oxy]butanoic acid), which plugs the channel like a cork in a bottle by binding in the extracellular selectivity filter and sterically occluding ion conduction. Lipids may block conduction in closed heterohexameric channels. In terms of biological role, essential component of the volume-regulated anion channel (VRAC, also named VSOAC channel), an anion channel required to maintain a constant cell volume in response to extracellular or intracellular osmotic changes. The VRAC channel conducts iodide better than chloride and can also conduct organic osmolytes like taurine. Mediates efflux of amino acids, such as aspartate and glutamate, in response to osmotic stress. LRRC8A and LRRC8D are required for the uptake of the drug cisplatin. In complex with LRRC8C or LRRC8E, acts as a transporter of immunoreactive cyclic dinucleotide GMP-AMP (2'-3'-cGAMP), an immune messenger produced in response to DNA virus in the cytosol: mediates both import and export of 2'-3'-cGAMP, thereby promoting transfer of 2'-3'-cGAMP to bystander cells. In contrast, complexes containing LRRC8D inhibit transport of 2'-3'-cGAMP. Required for in vivo channel activity, together with at least one other family member (LRRC8B, LRRC8C, LRRC8D or LRRC8E); channel characteristics depend on the precise subunit composition. Can form functional channels by itself (in vitro). Involved in B-cell development: required for the pro-B cell to pre-B cell transition. Also required for T-cell development. Required for myoblast differentiation: VRAC activity promotes membrane hyperpolarization and regulates insulin-stimulated glucose metabolism and oxygen consumption. Also acts as a regulator of glucose-sensing in pancreatic beta cells: VRAC currents, generated in response to hypotonicity- or glucose-induced beta cell swelling, depolarize cells, thereby causing electrical excitation, leading to increase glucose sensitivity and insulin secretion. Also plays a role in lysosome homeostasis by forming functional lysosomal VRAC channels in response to low cytoplasmic ionic strength condition: lysosomal VRAC channels are necessary for the formation of large lysosome-derived vacuoles, which store and then expel excess water to maintain cytosolic water homeostasis. Acts as a key factor in NLRP3 inflammasome activation by modulating itaconate efflux and mitochondria function. The chain is Volume-regulated anion channel subunit LRRC8A from Homo sapiens (Human).